The chain runs to 182 residues: Small heat shock protein hspG1 (182 aa).

The sHSP domain maps to 43–182; that stretch reads IKRIDIIPSM…SNSSFKININ (140 aa).

It belongs to the small heat shock protein (HSP20) family.

This Dictyostelium discoideum (Social amoeba) protein is Small heat shock protein hspG1 (hspG1).